A 377-amino-acid chain; its full sequence is Gap junction gamma-1 protein (377 aa).

Topologically, residues M1–T18 are cytoplasmic. Residues F19 to G39 form a helical membrane-spanning segment. Residues G40 to R75 are Extracellular-facing. A helical transmembrane segment spans residues F76–M96. At H97–K174 the chain is on the cytoplasmic side. A disordered region spans residues D129–G163. Positions E131–K151 are enriched in acidic residues. The helical transmembrane segment at V175–L197 threads the bilayer. Topologically, residues Y198–T228 are extracellular. The helical transmembrane segment at I229 to L249 threads the bilayer. Residues F250–L377 lie on the Cytoplasmic side of the membrane. Disordered regions lie at residues K265–G294 and L334–L377. The segment covering T337–N362 has biased composition (polar residues).

This sequence belongs to the connexin family. Gamma-type subfamily. In terms of assembly, a connexon is composed of a hexamer of connexins.

Its subcellular location is the cell membrane. It is found in the cell junction. It localises to the gap junction. One gap junction consists of a cluster of closely packed pairs of transmembrane channels, the connexons, through which materials of low MW diffuse from one cell to a neighboring cell. The sequence is that of Gap junction gamma-1 protein (gjc1) from Xenopus tropicalis (Western clawed frog).